The chain runs to 373 residues: Peptide chain release factor subunit 1 (373 aa).

This sequence belongs to the eukaryotic release factor 1 family. In terms of assembly, heterodimer of two subunits, one of which binds GTP.

It localises to the cytoplasm. In terms of biological role, directs the termination of nascent peptide synthesis (translation) in response to the termination codons UAA, UAG and UGA. The sequence is that of Peptide chain release factor subunit 1 (prf1) from Aeropyrum pernix (strain ATCC 700893 / DSM 11879 / JCM 9820 / NBRC 100138 / K1).